Here is a 214-residue protein sequence, read N- to C-terminus: Adenylate kinase (214 aa).

Position 10–15 (10–15) interacts with ATP; the sequence is GAGKGT. Residues 30–59 form an NMP region; sequence STGDMFRAAIKAGTELGKQAKALMDEGKLV. AMP-binding positions include Thr-31, Arg-36, 57-59, 85-88, and Gln-92; these read KLV and GFPR. The interval 122–159 is LID; the sequence is GRRVHQASGRSYHIVYNPPKVEGKDDVTGEDLIIRADD. ATP-binding positions include Arg-123 and 132 to 133; that span reads SY. AMP is bound by residues Arg-156 and Arg-167. Position 200 (Gln-200) interacts with ATP.

It belongs to the adenylate kinase family. Monomer.

Its subcellular location is the cytoplasm. The catalysed reaction is AMP + ATP = 2 ADP. The protein operates within purine metabolism; AMP biosynthesis via salvage pathway; AMP from ADP: step 1/1. Functionally, catalyzes the reversible transfer of the terminal phosphate group between ATP and AMP. Plays an important role in cellular energy homeostasis and in adenine nucleotide metabolism. It may be linked to the biosynthesis of lipopolysaccharide surface molecules, which are important for the pathogenesis of H.influenzae. The polypeptide is Adenylate kinase (Haemophilus influenzae (strain ATCC 51907 / DSM 11121 / KW20 / Rd)).